The chain runs to 577 residues: Secreted LysM effector Lys4 (577 aa).

The first 19 residues, 1–19 (MRALTAAVLFVAGLTPVLA), serve as a signal peptide directing secretion. Residues 38 to 85 (AWYTIVKGDGCDTVEKKFKITPEQFFKWNPDVSTDCVKNFWVGNSYCV) enclose the LysM 1 domain. The segment covering 96-121 (TSTTVKSSSTTQKTSSTSSKLSSSSK) has biased composition (low complexity). The interval 96-135 (TSTTVKSSSTTQKTSSTSSKLSSSSKPVNTTTTPYSTRNP) is disordered. The segment covering 122–135 (PVNTTTTPYSTRNP) has biased composition (polar residues). Residues Asn-124, Asn-140, Asn-216, and Asn-235 are each glycosylated (N-linked (GlcNAc...) asparagine). LysM domains are found at residues 251 to 298 (NFYQ…YYCV), 328 to 375 (KWYQ…WYCV), and 408 to 455 (QYWL…YVCV). Residues 464–485 (SGSTTTITGPPTKGSNPPTTTT) are compositionally biased toward low complexity. Residues 464–490 (SGSTTTITGPPTKGSNPPTTTTSGGGG) are disordered. The 49-residue stretch at 510 to 558 (FWFRGKDGASLFCADIAKDAGVSLPDFLKWNPGVGSNCESLWADTWYCV) folds into the LysM 5 domain.

Belongs to the secreted LysM effector family.

Functionally, might have a role in sequestration of chitin oligosaccharides (breakdown products of fungal cell walls that are released during invasion and act as triggers of host immunity) to dampen host defense. The sequence is that of Secreted LysM effector Lys4 from Pochonia chlamydosporia (strain 123) (Metacordyceps chlamydosporia).